The sequence spans 456 residues: Septin-10 (456 aa).

Positions 40 to 306 constitute a Septin-type G domain; the sequence is QGFCFNILCV…ELYRRCKLQE (267 aa). The tract at residues 50–57 is G1 motif; that stretch reads GETGIGKS. GTP is bound by residues 50-57, glycine 105, 186-194, glycine 240, and arginine 255; these read GETGIGKS and KADTISKSE. The G3 motif stretch occupies residues 102–105; sequence NTVG. A G4 motif region spans residues 185–188; that stretch reads AKAD. Serine 418 carries the post-translational modification Phosphoserine.

This sequence belongs to the TRAFAC class TrmE-Era-EngA-EngB-Septin-like GTPase superfamily. Septin GTPase family. In terms of assembly, septins polymerize into heterooligomeric protein complexes that form filaments, and can associate with cellular membranes, actin filaments and microtubules. GTPase activity is required for filament formation. Interacts with ADGB. In terms of processing, proteolytically cleaved in vitro in a calmodulin-dependent manner.

It localises to the cytoplasm. The protein resides in the cytoskeleton. The protein localises to the cell projection. Its subcellular location is the cilium. It is found in the flagellum. In terms of biological role, filament-forming cytoskeletal GTPase. May play a role in cytokinesis (Potential). The protein is Septin-10 of Rattus norvegicus (Rat).